The following is a 2349-amino-acid chain: MNGKSRDNGHDGKRQPVVPAEPIAIVGTAMRLPGDATNPSKLWQLLRNPPSDLSRRPPSERFSSAGFFHEDPEHHGTSNSEQSYFLREDIRAFDAAFFSIAPREAEAIDPQHRLLLEVVYEALEAAGIPLEKTQGSDTAVYVGQMSNDYWDHLLRDLDSIPKYMATGTARSVTANRLSYFFDWHGPSMTIDTACSSSMVALHEAVQVLRSGRAGMAVAAGCHLVLGPESYVIESKLRMISPTGTCKMWDAGADGYARAEGCAALILKTLSSALRDGDPIAALIRETGVNQDGRTRGITMPSAQAQAALIRETYLRAGLDPTHPRDQPQLFEAHGTGTQAGDPIEAEAIHLAFFNDGVAHKGTRERKEREKLLVGSIKTVVGHLEATAGLAGILKGIAAMNHRMVPPNLWFRTLNQRIAPFYRDFRVPTVLEEWPMTGFDGTLRCSVNSFGFGGTNAHTILESYEPQLVTATKMPREISFITPLTFSAASAASLVAVVDSYRRHLASKQDISLADLAFTLQSRRSALPYRIAFSGTDITSLIKQMSESVDSVKGTANVSIGTLNQQGKLEGGPPKLLGVFTGQGAQWPGMGRELLKSSKVFSDAIIKMEDSLATLPDPPSWSLVDQFKAKASPSSSEEATVAQPVSLALQIGLVDLLRASGVEFDSVVAHSSGEIAAAYTTGLISAHDAIRIAYYRGKYSALATEGGGMMAVGMSFAEAEAFCNQEQLRGRVTAAASNSPKSTTLSGRLSTLKEAASLLGNTFHRFLKVDKAYHSDAMLPCCKPFQAILEKCDIKVHKPNDVLWVSSVREGQQPRSFADLLSGPYWVETLHKPVLFSQALTRVLQMRSFDATLEIGPHPALRGPSLQTHADISLEKGKVLLYKGVLERFKHDGEAFSSCLGFLWQHFGWAHFEAYRSTSLTTDVPRVLDQLPTYPWNHESLYWTESSNSYRFRYREAYHPLLGFRSVDSHAMELRWKNVWSLREMPWLKGHVVQGQAVVPGVSYVTLALEAAAALGREGQETTRIELHDINIHRAIIVEEDEYSGTNVFVSVSRQNPDASCTRATFNIYASTNHEKEPFHVCSGDILLSHFAKDSGIQALGEFVVSTVYKDMSSVEPSLFYSEMKEVGLCWKEPFLSDSMYRSHHRSVLSATRSTADAHDGQLLLSPVLLDIGFQGALVGFASPGDGRLWNPYLPTHIDRCTFDLENLKLNKPCYDEVYFSSAVMGSTLPDLSTTATFTCDVYGFYAIDGNPFVQVEGLKFSCMYPAQETNDREMFANETWMPASPLDMELQPYDAQKHMGNLGAVVENLSHCDPRMKILHISDGESLVVPILESLQGAFARLDIADSSQSPALRHVEEVKELFPKDSKRIWSSDLNLTKLTSSPAIAENSYDLIICAQTIETGDDVESRCSKLRKLLKLGGSIILSTSPGTSCNLPLQRCGFTGVELELSVGPESRLILTRAKDDTSKTLETPLDDLDACTGEVIVIGGHQPEIQAIVDTFQKDVAGKLSKMTLLESLSDLETYGIPTDATVLCLADLHDDTLRNLAEGTLGGMKLLFETARRVLWVTQGRRNQNPFASMMVGLGRCIISESPLLNLQFLDIEDPLSDPVTHKTISECFIRLISLTTTGDFNVVRSWNQEPEMVLSQGKLLIPRIRPLPALNDRLNCQNRIIKKPLIAGDGTSVELTRSGAFYAAQEYDDYSAGRRITISHSVSLPIELPGQMKGYLGLGTMSSGERVVVISPNNRNIQSAEECAFAVHFQPRGNEADTLALIASAIFIRMAWEHTSDYVVLHQPSQSVYRLGTQMAEDAKSKLYFSVSGRNDLEKHANVVSIPSMATRQSLRNLMPGQVGAFIHVPGLAGAGDRVSADRMIRAMSTTCKIFHLATAAASSQNKSIDIRLSFNWKKACRILVQSVEDVAKFGNSNMLAENQPVKCIGIAEISGTPFSYDAARIIDWTKDSRLKVNIQSKNPTKHFSPNKTYLLVGLTGDLGRSLAQWMVRCGAQHIVLTSRSPRVPDSWLQACREISPQAQVRVFKMDVTDEADVRSVCHSICKSMPPIGGVANAAMVMDDCLFHKLQLASFNRVVEPKVVGSMILDKIFHDVDLDFFIMFSSISCIVGNRGQSSYSAANLAETTIASGRRSRGLSASTLALGMVVGVGYVARANLPTEAIKDNVRMQNGIPLGETDVHTAFFEAMLLGKESSRLIPELITGLKSIGSEDVELPLWHENPRFSHLSLLEGLDDVSLDSKKSSQGKVSVREQLRQSTMPQEPFEILSGSLKQKLKVMLKIDKQEISDEVALVQMGIDSLSAVEIRSWFAKEVGVDLPVLKILNGASIRGLCLEAIGQWKK.

Basic and acidic residues predominate over residues 1–14; sequence MNGKSRDNGHDGKR. Disordered stretches follow at residues 1-21 and 37-80; these read MNGK…VPAE and TNPS…TSNS. Positions 20–462 constitute a Ketosynthase family 3 (KS3) domain; that stretch reads AEPIAIVGTA…GTNAHTILES (443 aa). Active-site for beta-ketoacyl synthase activity residues include Cys-194, His-333, and His-382. Residues 578–888 are malonyl-CoA:ACP transacylase (MAT) domain; sequence VFTGQGAQWP…LLYKGVLERF (311 aa). Residues 958-1092 are N-terminal hotdog fold; that stretch reads HPLLGFRSVD…GDILLSHFAK (135 aa). Residues 958-1263 are dehydratase (DH) domain; the sequence is HPLLGFRSVD…QVEGLKFSCM (306 aa). Residues 958 to 1269 form the PKS/mFAS DH domain; that stretch reads HPLLGFRSVD…FSCMYPAQET (312 aa). Catalysis depends on His-990, which acts as the Proton acceptor; for dehydratase activity. The C-terminal hotdog fold stretch occupies residues 1111-1269; the sequence is MSSVEPSLFY…FSCMYPAQET (159 aa). Asp-1170 acts as the Proton donor; for dehydratase activity in catalysis. The ketoreductase (KR) domain stretch occupies residues 1976–2164; the sequence is SPNKTYLLVG…VVGVGYVARA (189 aa). Positions 2273–2347 constitute a Carrier domain; the sequence is EILSGSLKQK…GLCLEAIGQW (75 aa). Position 2307 is an O-(pantetheine 4'-phosphoryl)serine (Ser-2307).

Its pathway is mycotoxin biosynthesis. Reducing polyketide synthase; part of the gene clusters that mediate the biosynthesis of the host-selective toxins (HSTs) AF-toxins responsible for Alternaria black spot of strawberry disease by the strawberry pathotype. AF-toxin I and III are valine derivatives of 2,3-dyhydroxy-isovaleric acid and 2-hydroxy-isovaleric acid respectively, while AF II is an isoleucine derivative of 2-hydroxy-valeric acid. These derivatives are bound to a 9,10-epoxy-8-hydroxy-9-methyl-decatrienoic acid (EDA) moiety. On cellular level, AF-toxins affect plasma membrane of susceptible cells and cause a sudden increase in loss of K(+) after a few minutes of toxin treatment. The aldo-keto reductase AFTS1 catalyzes the conversion of 2-keto-isovaleric acid (2-KIV) to 2-hydroxy-isovaleric acid (2-HIV) by reduction of its ketone to an alcohol. The acyl-CoA ligase AFT1, the hydrolase AFT2 and the enoyl-CoA hydratases AFT3 and AFT6, but also the polyketide synthase AFT9, the acyl-CoA dehydrogenase AFT10, the cytochrome P450 monooxygenase AFT11 and the oxidoreductase AFT12 are all involved in the biosynthesis of the AK-, AF- and ACT-toxin common EDA structural moiety. The exact function of each enzyme, and of additional enzymes identified within the AF-toxin clusters have still to be determined. This chain is Reducing polyketide synthase AFT16-1, found in Alternaria alternata (Alternaria rot fungus).